A 271-amino-acid chain; its full sequence is Putative F-box protein L165 (271 aa).

Positions 4 to 49 (ICELFDDVILEIMNLLSDTDKINFMFCCSRFYYFIDLVYYNDIYDY) constitute an F-box domain. The segment at 251-271 (NIPKIVPKNTHYRNSSKKYRY) is disordered. A compositionally biased stretch (basic residues) spans 260–271 (THYRNSSKKYRY).

In Acanthamoeba polyphaga mimivirus (APMV), this protein is Putative F-box protein L165.